Consider the following 126-residue polypeptide: Ribosome-binding factor A (126 aa).

This sequence belongs to the RbfA family. As to quaternary structure, monomer. Binds 30S ribosomal subunits, but not 50S ribosomal subunits or 70S ribosomes.

The protein localises to the cytoplasm. One of several proteins that assist in the late maturation steps of the functional core of the 30S ribosomal subunit. Associates with free 30S ribosomal subunits (but not with 30S subunits that are part of 70S ribosomes or polysomes). Required for efficient processing of 16S rRNA. May interact with the 5'-terminal helix region of 16S rRNA. This Clostridioides difficile (strain 630) (Peptoclostridium difficile) protein is Ribosome-binding factor A.